The following is a 177-amino-acid chain: Trafficking regulator of GLUT4 1 (177 aa).

Over 1–105 (MAHPVQSEFP…QDQEAPRDYL (105 aa)) the chain is Cytoplasmic. Phosphoserine occurs at positions 48, 87, and 88. A disordered region spans residues 71–92 (EAPLPRSPSRASSRRASSIATT). Over residues 72–88 (APLPRSPSRASSRRASS) the composition is skewed to low complexity. An intramembrane region (helical) is located at residues 106–126 (ILAVVACFCPVWPLNLIPLII). Residues 127–153 (SIMSRSSMQQGNVDGARRLGRLARLLS) lie on the Cytoplasmic side of the membrane. The helical transmembrane segment at 154-174 (ITLIIMGIVIIMVAVTVNFTV) threads the bilayer. At 175 to 177 (QKK) the chain is on the extracellular side.

The protein belongs to the CD225/Dispanin family. In terms of assembly, interacts with SLC2A4; the interaction is required for proper SLC2A4 reacycling after insulin stimulation. Expressed at high levels in heart, mammary gland, adrenal gland, stomach, smooth muscle and skeletal muscle, and at lower levels in brain and lung. Strongly down-regulated in lung cancer tissues, due to hypermethylation of the corresponding locus. Expressed in adipose tissue.

It is found in the cell membrane. It localises to the endomembrane system. Its subcellular location is the cytoplasm. The protein localises to the perinuclear region. Its function is as follows. Regulates insulin-mediated adipose tissue glucose uptake and transport by modulation of SLC2A4 recycling. Not required for SLC2A4 membrane fusion upon an initial stimulus, but rather is necessary for proper protein recycling during prolonged insulin stimulation. The chain is Trafficking regulator of GLUT4 1 from Homo sapiens (Human).